Consider the following 173-residue polypeptide: Lipoprotein signal peptidase (173 aa).

The next 4 membrane-spanning stretches (helical) occupy residues 14–34 (LAWLWLTVLIVAVDQVSKYYF), 44–64 (IIVIPDYFSWTLAYNTGAAFS), 72–92 (WQRWLFALIAVVVSAVLVVWL), and 98–118 (DDTWLAIALALVLGGALGNLY). Catalysis depends on residues aspartate 128 and aspartate 147. Residues 139-159 (YFPAFNVADSAITVGAIMLAL) form a helical membrane-spanning segment.

This sequence belongs to the peptidase A8 family.

It localises to the cell inner membrane. The enzyme catalyses Release of signal peptides from bacterial membrane prolipoproteins. Hydrolyzes -Xaa-Yaa-Zaa-|-(S,diacylglyceryl)Cys-, in which Xaa is hydrophobic (preferably Leu), and Yaa (Ala or Ser) and Zaa (Gly or Ala) have small, neutral side chains.. It participates in protein modification; lipoprotein biosynthesis (signal peptide cleavage). This protein specifically catalyzes the removal of signal peptides from prolipoproteins. This is Lipoprotein signal peptidase from Pseudomonas syringae pv. tomato (strain ATCC BAA-871 / DC3000).